Here is a 1221-residue protein sequence, read N- to C-terminus: DNA-directed RNA polymerase subunit beta (1221 aa).

The disordered stretch occupies residues 1176–1221 (EKKKLAEEEAEIAAEAEAEGSAEGDAAEADADANEAETADDDKASK). A compositionally biased stretch (acidic residues) spans 1183–1215 (EEAEIAAEAEAEGSAEGDAAEADADANEAETAD).

It belongs to the RNA polymerase beta chain family. As to quaternary structure, the RNAP catalytic core consists of 2 alpha, 1 beta, 1 beta' and 1 omega subunit. When a sigma factor is associated with the core the holoenzyme is formed, which can initiate transcription.

The catalysed reaction is RNA(n) + a ribonucleoside 5'-triphosphate = RNA(n+1) + diphosphate. Functionally, DNA-dependent RNA polymerase catalyzes the transcription of DNA into RNA using the four ribonucleoside triphosphates as substrates. This Lactobacillus delbrueckii subsp. bulgaricus (strain ATCC 11842 / DSM 20081 / BCRC 10696 / JCM 1002 / NBRC 13953 / NCIMB 11778 / NCTC 12712 / WDCM 00102 / Lb 14) protein is DNA-directed RNA polymerase subunit beta.